The following is a 157-amino-acid chain: Thioredoxin 2 (157 aa).

The N-terminal stretch at 1–22 is a signal peptide; it reads MKHILALVVFIISFFCFKDVNC. The region spanning 46–157 is the Thioredoxin domain; sequence LRMYNKMPRL…ELTSTIRKHL (112 aa). Active-site nucleophile residues include Cys-82 and Cys-85. Residues Cys-82 and Cys-85 are joined by a disulfide bond.

This sequence belongs to the thioredoxin family. In terms of assembly, monomer. Component of the translocon PTEX complex composed of HSP101, EXP2, PTEX150, PTEX88 and TRX2. The disulfide bond between Cys-82 and Cys-85 acts as a redox-active center and is reduced by thioredoxin reductase TRXR.

In terms of biological role, participates in various redox reactions through the reversible oxidation of its active center dithiol to a disulfide and catalyzes dithiol-disulfide exchange reactions. As part of the translocon PTEX complex, plays a role in the export of parasite proteins into the host erythrocyte. The translocon PTEX complex is a multi-protein machinery resident in the parasite parasitophorous vacuolar membrane, responsible for protein secretion into host cells. May contribute to the unfolding of proteins containing the PEXEL localization motif before their passage through the translocon or regulate the PTEX complex function. This Plasmodium berghei (strain Anka) protein is Thioredoxin 2.